We begin with the raw amino-acid sequence, 1526 residues long: Myosin type-2 heavy chain 1 (1526 aa).

The Myosin N-terminal SH3-like domain maps to 22–73 (DDKRWVWISDPETAFTKAWIKEDLPDKKYVVRYNNSRDEKIVGEDEIDPVNP). In terms of domain architecture, Myosin motor spans 77–755 (DRVNDMAELT…VLAELEERRV (679 aa)). ATP is bound at residue 170-177 (GESGAGKT). Actin-binding stretches follow at residues 634–656 (LNQL…VPNE) and 734–748 (RIGV…GVLA). The IQ domain maps to 758 to 787 (LQRLMTMLQTRIRGFLQRKIFQKRLKDIQA). The stretch at 875 to 1244 (ALDKEEILRR…SLTKQVNELS (370 aa)) forms a coiled coil. S1044 carries the phosphoserine modification.

The protein belongs to the TRAFAC class myosin-kinesin ATPase superfamily. Myosin family. Binds to cdc4 and rlc1.

In terms of biological role, required for cell division. It is a component of the cdc12 'spot', a structure thought to mark the site of septation. May work in conjunction with myo3. This Schizosaccharomyces pombe (strain 972 / ATCC 24843) (Fission yeast) protein is Myosin type-2 heavy chain 1 (myo2).